A 337-amino-acid chain; its full sequence is 5-dehydro-2-deoxygluconokinase (337 aa).

The protein belongs to the carbohydrate kinase PfkB family.

It catalyses the reaction 5-dehydro-2-deoxy-D-gluconate + ATP = 6-phospho-5-dehydro-2-deoxy-D-gluconate + ADP + H(+). Its pathway is polyol metabolism; myo-inositol degradation into acetyl-CoA; acetyl-CoA from myo-inositol: step 5/7. Catalyzes the phosphorylation of 5-dehydro-2-deoxy-D-gluconate (2-deoxy-5-keto-D-gluconate or DKG) to 6-phospho-5-dehydro-2-deoxy-D-gluconate (DKGP). The chain is 5-dehydro-2-deoxygluconokinase from Geobacillus thermodenitrificans (strain NG80-2).